A 383-amino-acid chain; its full sequence is Succinyl-diaminopimelate desuccinylase (383 aa).

Residue H79 coordinates Zn(2+). Residue D81 is part of the active site. D110 is a binding site for Zn(2+). E141 (proton acceptor) is an active-site residue. Residues E142, E170, and H355 each coordinate Zn(2+).

It belongs to the peptidase M20A family. DapE subfamily. In terms of assembly, homodimer. Zn(2+) is required as a cofactor. The cofactor is Co(2+).

It catalyses the reaction N-succinyl-(2S,6S)-2,6-diaminopimelate + H2O = (2S,6S)-2,6-diaminopimelate + succinate. The protein operates within amino-acid biosynthesis; L-lysine biosynthesis via DAP pathway; LL-2,6-diaminopimelate from (S)-tetrahydrodipicolinate (succinylase route): step 3/3. Its function is as follows. Catalyzes the hydrolysis of N-succinyl-L,L-diaminopimelic acid (SDAP), forming succinate and LL-2,6-diaminopimelate (DAP), an intermediate involved in the bacterial biosynthesis of lysine and meso-diaminopimelic acid, an essential component of bacterial cell walls. This Helicobacter pylori (strain HPAG1) protein is Succinyl-diaminopimelate desuccinylase.